Consider the following 231-residue polypeptide: Large ribosomal subunit protein uL1 (231 aa).

This sequence belongs to the universal ribosomal protein uL1 family. In terms of assembly, part of the 50S ribosomal subunit.

Binds directly to 23S rRNA. The L1 stalk is quite mobile in the ribosome, and is involved in E site tRNA release. In terms of biological role, protein L1 is also a translational repressor protein, it controls the translation of the L11 operon by binding to its mRNA. This Carboxydothermus hydrogenoformans (strain ATCC BAA-161 / DSM 6008 / Z-2901) protein is Large ribosomal subunit protein uL1.